We begin with the raw amino-acid sequence, 503 residues long: MNYQLHELFKAVGIHRQIVGKDLIIDSISCDSRHISKGGLFFGLPGEKVDGGIFWRKALASGAVAAVIGEEAAQKDPPSNEDMVFVVSDPVAHWMGEMASVFWKRPSSQIDLIGVTGTNGKTTTTYLIEHLCKQSGITSALFGTLYNRWPKHSEVAIHTTAFGDVLQSQLAQAVAAGARLGVMEISSHALDQRRVAGCSFSGAVFTNLTQDHLDYHESMEAYFQSKALLFQAPLLRDKESCSVVNIDDPWGLRLSKQLNKSCWRASLEKRVIDSIQPELFLTDLNITNKGIEGVLHSPFGQGPFVSSLIGRFNLMNMLEAVGILIQHGVSLQELLPSIKSFSGVPGRMEQIKVEGDLPVVLVDYAHTPDGLKNALIALRSFGSGRLFCVFGCGGDRDRSKRPLMGAIASKFADHVTLTSDNPRTEDPQQILNDVLPGIATETELIIEIDRANAIQMAIMKALPGDIVLIAGKGHENYQILGLETIEFDDREIAKKILHLKLNP.

Ser-32 is a UDP-N-acetyl-alpha-D-muramoyl-L-alanyl-D-glutamate binding site. 117-123 (GTNGKTT) is an ATP binding site. UDP-N-acetyl-alpha-D-muramoyl-L-alanyl-D-glutamate-binding positions include 159-160 (TT), Ser-186, Gln-192, and Arg-194. Lys-226 is subject to N6-carboxylysine. Residues Arg-396, 420–423 (DNPR), Gly-471, and Glu-475 each bind meso-2,6-diaminopimelate. A Meso-diaminopimelate recognition motif motif is present at residues 420 to 423 (DNPR).

This sequence belongs to the MurCDEF family. MurE subfamily. Requires Mg(2+) as cofactor. In terms of processing, carboxylation is probably crucial for Mg(2+) binding and, consequently, for the gamma-phosphate positioning of ATP.

It localises to the cytoplasm. It carries out the reaction UDP-N-acetyl-alpha-D-muramoyl-L-alanyl-D-glutamate + meso-2,6-diaminopimelate + ATP = UDP-N-acetyl-alpha-D-muramoyl-L-alanyl-gamma-D-glutamyl-meso-2,6-diaminopimelate + ADP + phosphate + H(+). It functions in the pathway cell wall biogenesis; peptidoglycan biosynthesis. In terms of biological role, catalyzes the addition of meso-diaminopimelic acid to the nucleotide precursor UDP-N-acetylmuramoyl-L-alanyl-D-glutamate (UMAG) in the biosynthesis of bacterial cell-wall peptidoglycan. In Prochlorococcus marinus (strain SARG / CCMP1375 / SS120), this protein is UDP-N-acetylmuramoyl-L-alanyl-D-glutamate--2,6-diaminopimelate ligase.